We begin with the raw amino-acid sequence, 429 residues long: D-amino acid dehydrogenase (429 aa).

3–17 is a binding site for FAD; it reads VLILGSGVIGTTTAW.

It belongs to the DadA oxidoreductase family. The cofactor is FAD.

It carries out the reaction a D-alpha-amino acid + A + H2O = a 2-oxocarboxylate + AH2 + NH4(+). The protein operates within amino-acid degradation; D-alanine degradation; NH(3) and pyruvate from D-alanine: step 1/1. Oxidative deamination of D-amino acids. In Xanthomonas campestris pv. campestris (strain B100), this protein is D-amino acid dehydrogenase.